Reading from the N-terminus, the 728-residue chain is Ribosome biogenesis protein bop1-A (728 aa).

The disordered stretch occupies residues 1–114 (MKRGSQGEAG…ENDSSDEEDI (114 aa)). Residues 55–67 (SDDEEDHWSEEEE) are compositionally biased toward acidic residues. A compositionally biased stretch (basic and acidic residues) spans 68 to 77 (NPGKSPKEII). 7 WD repeats span residues 393-432 (GHKD…CMKS), 434-474 (VLEG…RLLC), 514-556 (KHQK…SQNP), 559-597 (KNKG…LTKK), 600-639 (TNCK…KPYK), 643-682 (HHKK…DLLQ), and 698-728 (HRDL…RLFT).

It belongs to the WD repeat BOP1/ERB1 family. In terms of assembly, component of the PeBoW complex, composed of bop1, pes1 and wdr12. The complex is held together by bop1, which interacts with pes1 via its N-terminal domain and with wdr12 via a high-affinity interaction between the seven-bladed beta-propeller domains of the 2 proteins. The PeBoW complex associates with the 66S pre-ribosome.

Its subcellular location is the nucleus. It localises to the nucleolus. It is found in the nucleoplasm. Its function is as follows. Component of the PeBoW complex, which is required for maturation of 28S and 5.8S ribosomal RNAs and formation of the 60S ribosome. In Xenopus laevis (African clawed frog), this protein is Ribosome biogenesis protein bop1-A (bop1-a).